The sequence spans 194 residues: Orotate phosphoribosyltransferase (194 aa).

117 to 125 (EDIVTTGLS) contacts 5-phospho-alpha-D-ribose 1-diphosphate. 2 residues coordinate orotate: threonine 121 and arginine 149.

It belongs to the purine/pyrimidine phosphoribosyltransferase family. PyrE subfamily. In terms of assembly, homodimer. Mg(2+) is required as a cofactor.

The enzyme catalyses orotidine 5'-phosphate + diphosphate = orotate + 5-phospho-alpha-D-ribose 1-diphosphate. Its pathway is pyrimidine metabolism; UMP biosynthesis via de novo pathway; UMP from orotate: step 1/2. Functionally, catalyzes the transfer of a ribosyl phosphate group from 5-phosphoribose 1-diphosphate to orotate, leading to the formation of orotidine monophosphate (OMP). This Parvibaculum lavamentivorans (strain DS-1 / DSM 13023 / NCIMB 13966) protein is Orotate phosphoribosyltransferase.